The following is a 641-amino-acid chain: Fructose-1,6-bisphosphatase class 3 (641 aa).

The protein belongs to the FBPase class 3 family. Mn(2+) is required as a cofactor.

The enzyme catalyses beta-D-fructose 1,6-bisphosphate + H2O = beta-D-fructose 6-phosphate + phosphate. The protein operates within carbohydrate biosynthesis; gluconeogenesis. The protein is Fructose-1,6-bisphosphatase class 3 of Bacillus velezensis (strain DSM 23117 / BGSC 10A6 / LMG 26770 / FZB42) (Bacillus amyloliquefaciens subsp. plantarum).